The sequence spans 340 residues: MKRVNVIQAKAFLKVIALLVPLLLNANGPAFALTEQASTPPHDSVASVSAPTAEAAVAAHAHGEEKAGDVIMHHILDNDVFSFEPFGEVHLPKIPPIAGVDISITKHVVMLWVVSAILLILFSLVGSKYKKMTARQAPTGLVNAMEALVEFIRIDVAKANIGVGYEKYLNYLLTVFFFVLLCNLLGLVPYGATATGNINVTLTLATFTFFITQVAALKAHGIKGYLAHLTGGTHPALWIIMIPIEFIGLFTKPVALTIRLFANMTAGHIVILSLIFISFILQSYIVAVVMSVPFSIFIYLLELFVAFLQAFIFTMLSSLFIGLASAHEGHEEHEAGVAHH.

An N-terminal signal peptide occupies residues 1–32 (MKRVNVIQAKAFLKVIALLVPLLLNANGPAFA). 6 consecutive transmembrane segments (helical) span residues 107-127 (HVVM…LVGS), 172-192 (LLTV…PYGA), 197-217 (NINV…VAAL), 236-256 (ALWI…PVAL), 269-289 (IVIL…VAVV), and 296-316 (IFIY…FTML).

The protein belongs to the ATPase A chain family. F-type ATPases have 2 components, CF(1) - the catalytic core - and CF(0) - the membrane proton channel. CF(1) has five subunits: alpha(3), beta(3), gamma(1), delta(1), epsilon(1). CF(0) has four main subunits: a, b, b' and c.

The protein localises to the cell inner membrane. In terms of biological role, key component of the proton channel; it plays a direct role in the translocation of protons across the membrane. The sequence is that of ATP synthase subunit a from Pelodictyon phaeoclathratiforme (strain DSM 5477 / BU-1).